Consider the following 254-residue polypeptide: uncharacterized protein (254 aa).

In terms of domain architecture, S4 RNA-binding spans 14-81 (IRLQKVLSQA…DSLVYLALNK (68 aa)). The Nucleophile role is filled by Asp-119.

Belongs to the pseudouridine synthase RsuA family.

The catalysed reaction is a uridine in RNA = a pseudouridine in RNA. This is an uncharacterized protein from Mycobacterium bovis (strain ATCC BAA-935 / AF2122/97).